We begin with the raw amino-acid sequence, 126 residues long: Acyl carrier protein 2, mitochondrial (126 aa).

The transit peptide at 1-36 directs the protein to the mitochondrion; that stretch reads MAARGAMLRYLRVNVNPTIQNPRECVLPFSILLRRF. Residues 48–123 form the Carrier domain; the sequence is SEVTDRVLSV…LAVDFIASHP (76 aa). Serine 83 bears the O-(pantetheine 4'-phosphoryl)serine mark.

This sequence belongs to the acyl carrier protein (ACP) family. Complex I is composed of at least 49 different subunits. In terms of processing, 4'-phosphopantetheine is transferred from CoA to a specific serine of the apo-ACP-like protein.

The protein localises to the mitochondrion. It participates in lipid metabolism; fatty acid biosynthesis. In terms of biological role, carrier of the growing fatty acid chain in fatty acid biosynthesis. May be involved in the synthesis of short and medium chain fatty acids. Accessory and non-catalytic subunit of the mitochondrial membrane respiratory chain NADH dehydrogenase (Complex I), which functions in the transfer of electrons from NADH to the respiratory chain. This Arabidopsis thaliana (Mouse-ear cress) protein is Acyl carrier protein 2, mitochondrial (MTACP2).